The following is an 841-amino-acid chain: Chitin synthase 1 (841 aa).

Residues 1-13 show a composition bias toward basic and acidic residues; that stretch reads MNPGQKQEHDQYP. The disordered stretch occupies residues 1-98; the sequence is MNPGQKQEHD…YGEAPRRQPR (98 aa). The segment covering 76–85 has biased composition (pro residues); that stretch reads PPQPMGPPSP. Transmembrane regions (helical) follow at residues 302–322, 385–405, 526–546, 564–584, 602–622, 644–664, 673–693, 778–798, and 816–836; these read WFFQ…IDVG, SVFG…FTAL, LIFS…LTSA, ILHT…FILA, FFAI…VVGV, NIII…FLFF, FIQY…YAFC, VISW…ENIL, and LWSV…YLIF.

It belongs to the chitin synthase family.

The protein resides in the cell membrane. The enzyme catalyses [(1-&gt;4)-N-acetyl-beta-D-glucosaminyl](n) + UDP-N-acetyl-alpha-D-glucosamine = [(1-&gt;4)-N-acetyl-beta-D-glucosaminyl](n+1) + UDP + H(+). In terms of biological role, polymerizes chitin, a structural polymer of the cell wall and septum, by transferring the sugar moiety of UDP-GlcNAc to the non-reducing end of the growing chitin polymer. This Phycomyces blakesleeanus (strain ATCC 8743b / DSM 1359 / FGSC 10004 / NBRC 33097 / NRRL 1555) protein is Chitin synthase 1 (chs1).